A 285-amino-acid chain; its full sequence is 2-dehydro-3-deoxyphosphooctonate aldolase (285 aa).

It belongs to the KdsA family.

The protein localises to the cytoplasm. It catalyses the reaction D-arabinose 5-phosphate + phosphoenolpyruvate + H2O = 3-deoxy-alpha-D-manno-2-octulosonate-8-phosphate + phosphate. Its pathway is carbohydrate biosynthesis; 3-deoxy-D-manno-octulosonate biosynthesis; 3-deoxy-D-manno-octulosonate from D-ribulose 5-phosphate: step 2/3. It participates in bacterial outer membrane biogenesis; lipopolysaccharide biosynthesis. In Bordetella parapertussis (strain 12822 / ATCC BAA-587 / NCTC 13253), this protein is 2-dehydro-3-deoxyphosphooctonate aldolase.